The sequence spans 281 residues: 3-mercaptopyruvate sulfurtransferase (281 aa).

Rhodanese domains follow at residues 17–135 (DDPE…LLEE) and 165–278 (HENT…LPVE). Position 179 (R179) interacts with substrate. C238 (cysteine persulfide intermediate) is an active-site residue. The tract at residues 238–244 (CGSGVTA) is substrate specificity.

It is found in the cytoplasm. It carries out the reaction 2-oxo-3-sulfanylpropanoate + [thioredoxin]-dithiol = [thioredoxin]-disulfide + hydrogen sulfide + pyruvate + H(+). In terms of biological role, catalyzes the transfer of sulfur from 3-mercaptopyruvate to a thiol-containing acceptor to form an intramolecular disulfide releasing hydrogen sulfide and pyruvate. In Escherichia coli O157:H7, this protein is 3-mercaptopyruvate sulfurtransferase (sseA).